A 232-amino-acid polypeptide reads, in one-letter code: Gene 65 protein (232 aa).

This Mycobacterium phage D29 (Mycobacteriophage D29) protein is Gene 65 protein (65).